The sequence spans 106 residues: UPF0091 protein RP266 (106 aa).

Belongs to the UPF0091 family.

The polypeptide is UPF0091 protein RP266 (Rickettsia prowazekii (strain Madrid E)).